A 296-amino-acid chain; its full sequence is D-alanine--D-alanine ligase (296 aa).

Residues 103–293 (KEILMHHRMP…FDSFVKRIIE (191 aa)) enclose the ATP-grasp domain. 129–180 (ISFPAAVKPSSGGSSIATFKVKSIQELKHAYEEASKYGEVMIEQWVTGKEIT) is a binding site for ATP. Aspartate 247, glutamate 260, and asparagine 262 together coordinate Mg(2+).

It belongs to the D-alanine--D-alanine ligase family. It depends on Mg(2+) as a cofactor. Mn(2+) serves as cofactor.

Its subcellular location is the cytoplasm. The enzyme catalyses 2 D-alanine + ATP = D-alanyl-D-alanine + ADP + phosphate + H(+). It participates in cell wall biogenesis; peptidoglycan biosynthesis. Cell wall formation. This chain is D-alanine--D-alanine ligase, found in Francisella tularensis subsp. holarctica (strain LVS).